Here is a 626-residue protein sequence, read N- to C-terminus: DNA mismatch repair protein MutL (626 aa).

The protein belongs to the DNA mismatch repair MutL/HexB family.

In terms of biological role, this protein is involved in the repair of mismatches in DNA. It is required for dam-dependent methyl-directed DNA mismatch repair. May act as a 'molecular matchmaker', a protein that promotes the formation of a stable complex between two or more DNA-binding proteins in an ATP-dependent manner without itself being part of a final effector complex. This Cellvibrio japonicus (strain Ueda107) (Pseudomonas fluorescens subsp. cellulosa) protein is DNA mismatch repair protein MutL.